Reading from the N-terminus, the 242-residue chain is Host range factor p28 (242 aa).

In terms of domain architecture, KilA-N spans 21 to 131 (YIDEPNDIRL…QSILRGLVNW (111 aa)). Residues 173–226 (CGICYEVVYSKRLENDRYFGLLDSCNHIFCITCINIWHRTRRETGASDNCPICR) form an RING-type zinc finger.

The protein belongs to the orthopoxvirus OPG021 family.

The protein localises to the host cytoplasm. It carries out the reaction S-ubiquitinyl-[E2 ubiquitin-conjugating enzyme]-L-cysteine + [acceptor protein]-L-lysine = [E2 ubiquitin-conjugating enzyme]-L-cysteine + N(6)-ubiquitinyl-[acceptor protein]-L-lysine.. RING-finger E3 ubiquitin ligase which catalyzes the formation of both 'Lys-48'- and 'Lys-63'-linked polyubiquitin chains. Plays an important role in virulence by acting as an anti-apoptotic factor. The sequence is that of Host range factor p28 (OPG021) from Monkeypox virus.